The chain runs to 151 residues: Ubiquitin-conjugating enzyme E2 W (151 aa).

Residues 3–151 enclose the UBC core domain; that stretch reads SMQKRLQKEL…TKWWYHDDTC (149 aa). Cys91 acts as the Glycyl thioester intermediate in catalysis.

This sequence belongs to the ubiquitin-conjugating enzyme family.

The protein localises to the nucleus. The enzyme catalyses S-ubiquitinyl-[E1 ubiquitin-activating enzyme]-L-cysteine + [E2 ubiquitin-conjugating enzyme]-L-cysteine = [E1 ubiquitin-activating enzyme]-L-cysteine + S-ubiquitinyl-[E2 ubiquitin-conjugating enzyme]-L-cysteine.. It carries out the reaction S-ubiquitinyl-[E1 ubiquitin-activating enzyme]-L-cysteine + [acceptor protein]-N-terminal-amino acid = [E1 ubiquitin-activating enzyme]-L-cysteine + N-terminal-ubiquitinyl-[acceptor protein].. Its pathway is protein modification; protein ubiquitination. Its function is as follows. Accepts ubiquitin from the E1 complex and catalyzes its covalent attachment to other proteins. Catalyzes monoubiquitination. Involved in degradation of misfolded chaperone substrate and DNA repair. This is Ubiquitin-conjugating enzyme E2 W (ube2w) from Xenopus tropicalis (Western clawed frog).